Consider the following 91-residue polypeptide: Elongation factor 1-beta (91 aa).

Belongs to the EF-1-beta/EF-1-delta family.

Functionally, promotes the exchange of GDP for GTP in EF-1-alpha/GDP, thus allowing the regeneration of EF-1-alpha/GTP that could then be used to form the ternary complex EF-1-alpha/GTP/AAtRNA. This is Elongation factor 1-beta from Saccharolobus islandicus (strain Y.N.15.51 / Yellowstone #2) (Sulfolobus islandicus).